We begin with the raw amino-acid sequence, 509 residues long: Ribonuclease Y (509 aa).

A helical membrane pass occupies residues 3 to 23 (IIFSSIFAGFILGFLIRVFLG). The 61-residue stretch at 197-257 (TVASVELPND…IRKELAKRTL (61 aa)) folds into the KH domain. Positions 323–418 (VLSHSKETAI…VQIADAISAS (96 aa)) constitute an HD domain.

The protein belongs to the RNase Y family.

Its subcellular location is the cell membrane. Functionally, endoribonuclease that initiates mRNA decay. This chain is Ribonuclease Y, found in Borreliella afzelii (strain PKo) (Borrelia afzelii).